The primary structure comprises 88 residues: Small ribosomal subunit protein uS15 (88 aa).

It belongs to the universal ribosomal protein uS15 family. Part of the 30S ribosomal subunit. Forms a bridge to the 50S subunit in the 70S ribosome, contacting the 23S rRNA.

Functionally, one of the primary rRNA binding proteins, it binds directly to 16S rRNA where it helps nucleate assembly of the platform of the 30S subunit by binding and bridging several RNA helices of the 16S rRNA. In terms of biological role, forms an intersubunit bridge (bridge B4) with the 23S rRNA of the 50S subunit in the ribosome. The protein is Small ribosomal subunit protein uS15 of Francisella tularensis subsp. holarctica (strain LVS).